Consider the following 1393-residue polypeptide: Polarized growth protein RAX2 (1393 aa).

Positions 1-21 (MLVQFQQLLLLLISIIKLCQA) are cleaved as a signal peptide. Residues 22–1329 (DDNDNSFFQP…TNKNLSRGKV (1308 aa)) lie on the Extracellular side of the membrane. 48 N-linked (GlcNAc...) asparagine glycosylation sites follow: asparagine 62, asparagine 85, asparagine 105, asparagine 125, asparagine 133, asparagine 139, asparagine 164, asparagine 186, asparagine 195, asparagine 212, asparagine 256, asparagine 260, asparagine 266, asparagine 269, asparagine 362, asparagine 398, asparagine 405, asparagine 479, asparagine 536, asparagine 542, asparagine 565, asparagine 599, asparagine 646, asparagine 649, asparagine 653, asparagine 674, asparagine 689, asparagine 696, asparagine 702, asparagine 714, asparagine 747, asparagine 764, asparagine 768, asparagine 792, asparagine 829, asparagine 863, asparagine 899, asparagine 935, asparagine 946, asparagine 958, asparagine 985, asparagine 1020, asparagine 1030, asparagine 1041, asparagine 1213, asparagine 1232, asparagine 1262, and asparagine 1323. The helical transmembrane segment at 1330-1350 (VGISLACALGSTTLLGLLYII) threads the bilayer. Topologically, residues 1351–1393 (PYFALFKNRKDGYFQPERIHEDEMMDAVNPEDLLHEIDLQREK) are cytoplasmic.

It belongs to the RAX2 family.

The protein localises to the cell membrane. It is found in the cell tip. Required for establishing sites of emergence of yeast and hyphal daughters and for maintaining the linearity of hyphal growth, but not involved in responses that require a reorientation of the direction of already established hyphal growth (tropisms). Does not play a role in penetration or injury of human epithelial cells. The protein is Polarized growth protein RAX2 of Candida albicans (strain SC5314 / ATCC MYA-2876) (Yeast).